The following is a 936-amino-acid chain: Myocardin-related transcription factor A (936 aa).

3 RPEL repeats span residues 15-40 (TVLQ…PPLK), 59-84 (DYLK…EETS), and 103-128 (DDLN…PVET). The short motif at 62–100 (KRKIRSRPERAELVRMHILEETSAEPSLQAKQIKLKRAR) is the Bipartite Nuclear localization signal element. 3 disordered regions span residues 146–185 (SSFD…TQIP), 234–258 (SQPK…KVKK), and 401–422 (SQDP…QAKP). The segment covering 160–170 (QPASQESQGSI) has biased composition (polar residues). Residues 239–254 (SFEKSQRIKKPKEPKP) show a composition bias toward basic and acidic residues. The 35-residue stretch at 368–402 (LDEMKVAELKLELKHRGLPVSGTKIDLIERLKASQ) folds into the SAP domain. Low complexity predominate over residues 404-416 (PSTATAASAKPTP). Residues 497–542 (DARDKDLMLREKDRQIEELTQRLKQKQELVERLRQQLEQEKRTPQH) adopt a coiled-coil conformation. Positions 707 to 755 (HNESPATPPQQPEPEPPPHSIFLTHSSPQWSKNPPGYDEAMKQQPNSCE) are disordered. Residues 712 to 725 (ATPPQQPEPEPPPH) show a composition bias toward pro residues. The span at 729-738 (LTHSSPQWSK) shows a compositional bias: polar residues.

As to quaternary structure, interacts with srf, forming the srf-mrtfa nuclear complex which binds the 5'-CArG-3' consensus motif (CArG box) on DNA via srf. Interacts (via RPEL repeats) with globular actin (G-actin), thereby regulating its subcellular location and activity of the complex formed with srf.

It is found in the cytoplasm. The protein resides in the nucleus. In terms of biological role, transcription coactivator that associates with the serum response factor (srf) transcription factor to control expression of genes regulating the cytoskeleton during development, morphogenesis and cell migration. The srf-mrtfa complex activity responds to Rho GTPase-induced changes in cellular globular actin (G-actin) concentration, thereby coupling cytoskeletal gene expression to cytoskeletal dynamics. Mrtfa binds G-actin via its RPEL repeats, regulating activity of the mrtfa-srf complex. Activity is also regulated by filamentous actin (F-actin) in the nucleus. This chain is Myocardin-related transcription factor A (mrtfa), found in Xenopus laevis (African clawed frog).